We begin with the raw amino-acid sequence, 179 residues long: Large ribosomal subunit protein uL5 (179 aa).

Belongs to the universal ribosomal protein uL5 family. In terms of assembly, part of the 50S ribosomal subunit; part of the 5S rRNA/L5/L18/L25 subcomplex. Contacts the 5S rRNA and the P site tRNA. Forms a bridge to the 30S subunit in the 70S ribosome.

In terms of biological role, this is one of the proteins that bind and probably mediate the attachment of the 5S RNA into the large ribosomal subunit, where it forms part of the central protuberance. In the 70S ribosome it contacts protein S13 of the 30S subunit (bridge B1b), connecting the 2 subunits; this bridge is implicated in subunit movement. Contacts the P site tRNA; the 5S rRNA and some of its associated proteins might help stabilize positioning of ribosome-bound tRNAs. In Idiomarina loihiensis (strain ATCC BAA-735 / DSM 15497 / L2-TR), this protein is Large ribosomal subunit protein uL5.